The chain runs to 362 residues: uncharacterized protein (362 aa).

The chain crosses the membrane as a helical span at residues 13–33 (VLILSVGLNMLFLLLFYSAIF). One can recognise a LysM domain in the interval 314–357 (EEYVVQDGDSLWLIAKRFGIPMDKIIQKNGLNHHRLFPGKVLKL).

This sequence belongs to the chlamydial CPn_0593/CT_474/TC_0759 family.

The protein resides in the membrane. This is an uncharacterized protein from Chlamydia pneumoniae (Chlamydophila pneumoniae).